The chain runs to 522 residues: Maturase K (522 aa).

This sequence belongs to the intron maturase 2 family. MatK subfamily.

It localises to the plastid. The protein resides in the chloroplast. Functionally, usually encoded in the trnK tRNA gene intron. Probably assists in splicing its own and other chloroplast group II introns. The polypeptide is Maturase K (Aristea glauca).